We begin with the raw amino-acid sequence, 186 residues long: Peptidyl-tRNA hydrolase (186 aa).

A tRNA-binding site is contributed by tyrosine 14. Histidine 19 functions as the Proton acceptor in the catalytic mechanism. Phenylalanine 64, asparagine 66, and asparagine 112 together coordinate tRNA.

Belongs to the PTH family. As to quaternary structure, monomer.

It is found in the cytoplasm. The catalysed reaction is an N-acyl-L-alpha-aminoacyl-tRNA + H2O = an N-acyl-L-amino acid + a tRNA + H(+). Hydrolyzes ribosome-free peptidyl-tRNAs (with 1 or more amino acids incorporated), which drop off the ribosome during protein synthesis, or as a result of ribosome stalling. Its function is as follows. Catalyzes the release of premature peptidyl moieties from peptidyl-tRNA molecules trapped in stalled 50S ribosomal subunits, and thus maintains levels of free tRNAs and 50S ribosomes. This chain is Peptidyl-tRNA hydrolase, found in Listeria monocytogenes serotype 4a (strain HCC23).